A 243-amino-acid polypeptide reads, in one-letter code: MKLYRDEAVVLRTHKLGEADRILTLLTRHHGQVRAVAKGVRRTSSKFGARLEPFGVIDLQLYAGRSLDVVTQVDTLAPHGRSIVGDYALYTTATAMVETAERLTEIEREPATQQYLLLVGALRALAERAHAPTLVLDSYLLRSLAVAGWAPTFTDCARCSREGPHRAFSAPMGGALCQACRPPGAAAPAAETFLLLGALLAGDWALADASDERHRRESSGLVAAYLQWHLERQLRSLRHVERA.

Belongs to the RecO family.

Functionally, involved in DNA repair and RecF pathway recombination. The protein is DNA repair protein RecO of Beutenbergia cavernae (strain ATCC BAA-8 / DSM 12333 / CCUG 43141 / JCM 11478 / NBRC 16432 / NCIMB 13614 / HKI 0122).